The following is a 513-amino-acid chain: Na(+)/H(+) antiporter NhaB (513 aa).

9 consecutive transmembrane segments (helical) span residues 21-41 (ICII…SPFV), 88-108 (IMAN…IYFM), 119-139 (LLIV…SATF), 243-263 (LPVS…LEHF), 299-318 (MGIQ…LHLA), 322-344 (IIGL…HAIG), 350-370 (PMPF…IVDL), 389-409 (LALF…VFVG), and 477-497 (MALP…EFLL).

This sequence belongs to the NhaB Na(+)/H(+) (TC 2.A.34) antiporter family.

It localises to the cell inner membrane. It carries out the reaction 2 Na(+)(in) + 3 H(+)(out) = 2 Na(+)(out) + 3 H(+)(in). Functionally, na(+)/H(+) antiporter that extrudes sodium in exchange for external protons. The sequence is that of Na(+)/H(+) antiporter NhaB from Actinobacillus pleuropneumoniae serotype 5b (strain L20).